We begin with the raw amino-acid sequence, 305 residues long: MKYNVMFFGTPEIAKIVLETLFNMPEVNLIGVVSQPDSHFDRKKNVVYSPVKQFCLDHDIKLFQPQKIKEIEEEIRSLAPDIIITCAFGQFINQGIIDIPKYKIVNVHASLLPKLRGGAPIHYAILNGDLQTGITLMHTIKKMDAGNILFQRSLAINEQTTTKILTLELANLGALMIKEHFLELVKSDLVGIQQDENDVSFAYNIQKNQNIIDFNKPAFFVNRFVNAMYDKPIAIMEYNDVLIKVHQIKITNQKSTQKPGTIAISKHQIFVSTQDFNVELLLIQLPNKKPLAPKALLNGKNPFSN.

110-113 (SLLP) is a binding site for (6S)-5,6,7,8-tetrahydrofolate.

It belongs to the Fmt family.

It catalyses the reaction L-methionyl-tRNA(fMet) + (6R)-10-formyltetrahydrofolate = N-formyl-L-methionyl-tRNA(fMet) + (6S)-5,6,7,8-tetrahydrofolate + H(+). Attaches a formyl group to the free amino group of methionyl-tRNA(fMet). The formyl group appears to play a dual role in the initiator identity of N-formylmethionyl-tRNA by promoting its recognition by IF2 and preventing the misappropriation of this tRNA by the elongation apparatus. The chain is Methionyl-tRNA formyltransferase from Ureaplasma urealyticum serovar 10 (strain ATCC 33699 / Western).